A 317-amino-acid polypeptide reads, in one-letter code: tRNA-dihydrouridine(16) synthase (317 aa).

Residues 7–9 and Q68 each bind FMN; that span reads PME. The active-site Proton donor is the C98. FMN-binding positions include K139, 199 to 201, and 223 to 224; these read NGE and GR.

This sequence belongs to the Dus family. DusC subfamily. FMN serves as cofactor.

It catalyses the reaction 5,6-dihydrouridine(16) in tRNA + NADP(+) = uridine(16) in tRNA + NADPH + H(+). It carries out the reaction 5,6-dihydrouridine(16) in tRNA + NAD(+) = uridine(16) in tRNA + NADH + H(+). In terms of biological role, catalyzes the synthesis of 5,6-dihydrouridine (D), a modified base found in the D-loop of most tRNAs, via the reduction of the C5-C6 double bond in target uridines. Specifically modifies U16 in tRNAs. This chain is tRNA-dihydrouridine(16) synthase, found in Pseudomonas syringae pv. tomato (strain ATCC BAA-871 / DC3000).